We begin with the raw amino-acid sequence, 1499 residues long: Ubiquitinating/deubiquitinating enzyme SdeA (1499 aa).

A deubiquitinase region spans residues 1–193 (MPKYVEGVEL…GKALRENTEK (193 aa)). Catalysis depends on for deubiquitinase activity residues His64 and Asp80. Residue Cys118 is the Nucleophile; for deubiquitinase activity of the active site. The tract at residues 760-1000 (PPTRLFRGLN…KALAAFPSDT (241 aa)) is mono-ADP-ribosyltransferase. Position 766 to 772 (766 to 772 (RGLNLSE)) interacts with NAD(+). At Glu860 the chain carries 5-glutamyl glutamate. Glu862 lines the NAD(+) pocket. The stretch at 1059–1181 (KEMGTIRREL…IDTKLADAYL (123 aa)) forms a coiled coil.

It belongs to the SidE family. In terms of assembly, interacts with IcmS. Is able to ubiquitinate itself, but this modification is not required to ubiquitinate Rab33b. Post-translationally, glutamylated at Glu-860 by SidJ; glutamylation inhibits SdeA activity to catalyze the production of ADP-ribosylated ubiquitin.

The protein resides in the secreted. Its subcellular location is the host cell. It catalyses the reaction L-arginyl-[protein] + NAD(+) = N(omega)-(ADP-D-ribosyl)-L-arginyl-[protein] + nicotinamide + H(+). Its activity is regulated as follows. Ubiquitination catalyzed by SdeA is insensitive to the cysteine alkylation agent maleimide, suggesting that a cysteine conjugation of ubiquitin does not form during the reaction. Its function is as follows. Secreted effector that interferes with the host cell ubiquitin pathway and is required for intracellular bacterial replication. Catalyzes the ubiquitination of several mammalian Rab proteins (Rab33b, Rab1, Rab6a and Rab30) during L.pneumophila infection, without engaging the standard cellular enzyme cascade (E1 and E2). Transfers an ADP-ribose moiety from NAD to the 'Arg-42' residue of ubiquitin in a reaction that releases nicotinamide. The modified ubiquitin is subsequently transferred to serine residues of the substrate protein via a phosphoribose linker that results in the release of AMP. Cannot ubiquitinate the endosomal Rab5 or the cytoskeletal small GTPase Rac1. Also acts as a deubiquitinase (DUB), catalyzing the cleavage of three of the most abundant polyubiquitin chains ('Lys-11', 'Lys-48' and 'Lys-63') with a distinct preference for 'Lys-63' linkages; is thus able to efficiently remove 'Lys-63'-linked polyubiquitin chains from the phagosomal surface. Is also able to remove NEDD8 from neddylated proteins, but is unable to recognize SUMO. The DUB activity of SdeA is important for regulating the dynamics of ubiquitin association with the bacterial phagosome, but is dispensable for its role in intracellular bacterial replication. The polypeptide is Ubiquitinating/deubiquitinating enzyme SdeA (Legionella pneumophila subsp. pneumophila (strain Philadelphia 1 / ATCC 33152 / DSM 7513)).